The following is a 526-amino-acid chain: Peptide chain release factor 3 (526 aa).

Residues 9–277 form the tr-type G domain; that stretch reads DKRRTFAIIS…GIVEWAPKPQ (269 aa). GTP is bound by residues 18–25, 86–90, and 140–143; these read SHPDAGKT, DTPGH, and NKLD.

Belongs to the TRAFAC class translation factor GTPase superfamily. Classic translation factor GTPase family. PrfC subfamily.

The protein localises to the cytoplasm. Increases the formation of ribosomal termination complexes and stimulates activities of RF-1 and RF-2. It binds guanine nucleotides and has strong preference for UGA stop codons. It may interact directly with the ribosome. The stimulation of RF-1 and RF-2 is significantly reduced by GTP and GDP, but not by GMP. This is Peptide chain release factor 3 from Shewanella sediminis (strain HAW-EB3).